We begin with the raw amino-acid sequence, 217 residues long: Probable transaldolase (217 aa).

The active-site Schiff-base intermediate with substrate is the Lys-83.

Belongs to the transaldolase family. Type 3B subfamily.

The protein localises to the cytoplasm. It carries out the reaction D-sedoheptulose 7-phosphate + D-glyceraldehyde 3-phosphate = D-erythrose 4-phosphate + beta-D-fructose 6-phosphate. Its pathway is carbohydrate degradation; pentose phosphate pathway; D-glyceraldehyde 3-phosphate and beta-D-fructose 6-phosphate from D-ribose 5-phosphate and D-xylulose 5-phosphate (non-oxidative stage): step 2/3. In terms of biological role, transaldolase is important for the balance of metabolites in the pentose-phosphate pathway. The protein is Probable transaldolase of Fervidobacterium nodosum (strain ATCC 35602 / DSM 5306 / Rt17-B1).